The chain runs to 347 residues: MTPPSRIVTPERRADDVGDTALRPQTLAEFVGQQQARANLQIFIDAARKRQEALDHVLFVGPPGLGKTTLAQIVARELGVGFRATSGPVIAKAGDLAALLTNLEERDVLFIDEIHRLSPAVEEVLYPAMEDFQLDLIIGEGPAARSVKIELSKFTLVGATTRAGLLTNPLRDRFGIPIRLNFYTVEELEGIVSRGARVLGTGITPDGANEIARRARGTPRIAGRLLRRVRDFASAADAAAIDRRIADHALSALEVDAAGLDAMDRRYLSTIALNYGGGPVGVETMAAALSEPRDAIEDIIEPFLIQCGYLQRTPRGRLLTSHAFKHLGLAEPSREASQFGLFGGDEE.

The interval 1–183 (MTPPSRIVTP…FGIPIRLNFY (183 aa)) is large ATPase domain (RuvB-L). Residues Leu-22, Arg-23, Gly-64, Lys-67, Thr-68, Thr-69, 130 to 132 (EDF), Arg-173, Tyr-183, and Arg-220 contribute to the ATP site. A Mg(2+)-binding site is contributed by Thr-68. Positions 184–254 (TVEELEGIVS…IADHALSALE (71 aa)) are small ATPAse domain (RuvB-S). Residues 257–347 (AAGLDAMDRR…QFGLFGGDEE (91 aa)) form a head domain (RuvB-H) region. 3 residues coordinate DNA: Arg-293, Arg-312, and Arg-317.

It belongs to the RuvB family. Homohexamer. Forms an RuvA(8)-RuvB(12)-Holliday junction (HJ) complex. HJ DNA is sandwiched between 2 RuvA tetramers; dsDNA enters through RuvA and exits via RuvB. An RuvB hexamer assembles on each DNA strand where it exits the tetramer. Each RuvB hexamer is contacted by two RuvA subunits (via domain III) on 2 adjacent RuvB subunits; this complex drives branch migration. In the full resolvosome a probable DNA-RuvA(4)-RuvB(12)-RuvC(2) complex forms which resolves the HJ.

The protein localises to the cytoplasm. The enzyme catalyses ATP + H2O = ADP + phosphate + H(+). In terms of biological role, the RuvA-RuvB-RuvC complex processes Holliday junction (HJ) DNA during genetic recombination and DNA repair, while the RuvA-RuvB complex plays an important role in the rescue of blocked DNA replication forks via replication fork reversal (RFR). RuvA specifically binds to HJ cruciform DNA, conferring on it an open structure. The RuvB hexamer acts as an ATP-dependent pump, pulling dsDNA into and through the RuvAB complex. RuvB forms 2 homohexamers on either side of HJ DNA bound by 1 or 2 RuvA tetramers; 4 subunits per hexamer contact DNA at a time. Coordinated motions by a converter formed by DNA-disengaged RuvB subunits stimulates ATP hydrolysis and nucleotide exchange. Immobilization of the converter enables RuvB to convert the ATP-contained energy into a lever motion, pulling 2 nucleotides of DNA out of the RuvA tetramer per ATP hydrolyzed, thus driving DNA branch migration. The RuvB motors rotate together with the DNA substrate, which together with the progressing nucleotide cycle form the mechanistic basis for DNA recombination by continuous HJ branch migration. Branch migration allows RuvC to scan DNA until it finds its consensus sequence, where it cleaves and resolves cruciform DNA. The polypeptide is Holliday junction branch migration complex subunit RuvB (Rhodopseudomonas palustris (strain BisA53)).